Reading from the N-terminus, the 315-residue chain is Olfactory receptor 2V1 (315 aa).

The Extracellular segment spans residues 1–31; that stretch reads MGRWVNQSYTDGFFLLGIFSHSQTDLVLFSA. An N-linked (GlcNAc...) asparagine glycan is attached at asparagine 6. Residues 32–52 traverse the membrane as a helical segment; that stretch reads VMVVFTVALCGNVLLIFLIYL. The Cytoplasmic portion of the chain corresponds to 53 to 58; the sequence is DAGLHT. A helical transmembrane segment spans residues 59-79; sequence PMYFFLSQLSLMDLMLVCNIV. Topologically, residues 80-99 are extracellular; sequence PKMAANFLSGRKSISFVGCG. Residues cysteine 98 and cysteine 180 are joined by a disulfide bond. The chain crosses the membrane as a helical span at residues 100–120; that stretch reads IQIGFFVSLVGSEGLLLGLMA. Topologically, residues 121–149 are cytoplasmic; that stretch reads YDRYVAVSHPLHYPILMNQRVCLQITGSS. Residues 150–170 form a helical membrane-spanning segment; sequence WAFGIIDGVIQMVAAMGLPYC. The Extracellular segment spans residues 171 to 198; it reads GSRSVDHFFCEVQALLKLACADTSLFDT. Residues 199–219 traverse the membrane as a helical segment; that stretch reads LLFACCVFMLLLPFSIIMASY. Residues 220–238 are Cytoplasmic-facing; that stretch reads ACILGAVLRIRSAQAWKKA. A helical transmembrane segment spans residues 239-259; it reads LATCSSHLTAVTLFYGAAMFM. At 260–272 the chain is on the extracellular side; the sequence is YLRPRRYRAPSHD. Residues 273 to 293 traverse the membrane as a helical segment; sequence KVASIFYTVLTPMLNPLIYSL. Topologically, residues 294–315 are cytoplasmic; that stretch reads RNGEVMGALRKGLDRCRIGSQH.

This sequence belongs to the G-protein coupled receptor 1 family.

Its subcellular location is the cell membrane. In terms of biological role, odorant receptor. The chain is Olfactory receptor 2V1 (OR2V1) from Homo sapiens (Human).